Here is a 104-residue protein sequence, read N- to C-terminus: MFAVIKTGGKQYRVAANDTITIASLAGEAGEAVTFGEVLLFADGAGATQVGAPTLSGISVTGEIVRHGRDKKVIAFKKRRRQNSRRKRGHRQDHTVVRITGISA.

Residues 78–91 (KRRRQNSRRKRGHR) show a composition bias toward basic residues. Residues 78 to 104 (KRRRQNSRRKRGHRQDHTVVRITGISA) are disordered.

It belongs to the bacterial ribosomal protein bL21 family. In terms of assembly, part of the 50S ribosomal subunit. Contacts protein L20.

In terms of biological role, this protein binds to 23S rRNA in the presence of protein L20. This is Large ribosomal subunit protein bL21 from Methylobacterium radiotolerans (strain ATCC 27329 / DSM 1819 / JCM 2831 / NBRC 15690 / NCIMB 10815 / 0-1).